Consider the following 190-residue polypeptide: Lipid A 1-phosphatase (190 aa).

Helical transmembrane passes span 22 to 42 (LLAL…PKVP), 60 to 80 (FIPT…VGLF), 117 to 137 (GNFN…AFLM), 145 to 162 (YFWL…RIYL), and 164 to 184 (MHTI…VSLF).

This sequence belongs to the lipid A LpxE 1-phosphatase family. Does not require divalent cations. serves as cofactor.

The protein resides in the cell inner membrane. Its pathway is bacterial outer membrane biogenesis; LPS lipid A biosynthesis. Removes the 1-phosphate group from tetra- and probably hexaacylated lipid A species, has no requirement for the Kdo moiety of lipid A. Has no 4'-phosphatase activity. Has no activity on phospholipids (phosphatidylglycerol, phosphatidylethanolamine or cardiolipin). This enzyme has to act before EptA can attach phosphoethanolamine to the 1-position of lipid A. Absence of the 1-phosphate group renders the bacteria partially resistant to host-derived cationic antimicrobial peptides (CAMP), allowing it to camouflage itself from the host innate immune response, and plays a role in the long-term colonization of the host's stomach. In Helicobacter pylori (strain ATCC 700392 / 26695) (Campylobacter pylori), this protein is Lipid A 1-phosphatase.